Consider the following 395-residue polypeptide: NAD(P)H-quinone oxidoreductase subunit H, chloroplastic (395 aa).

This sequence belongs to the complex I 49 kDa subunit family. As to quaternary structure, NDH is composed of at least 16 different subunits, 5 of which are encoded in the nucleus.

It is found in the plastid. Its subcellular location is the chloroplast thylakoid membrane. It catalyses the reaction a plastoquinone + NADH + (n+1) H(+)(in) = a plastoquinol + NAD(+) + n H(+)(out). It carries out the reaction a plastoquinone + NADPH + (n+1) H(+)(in) = a plastoquinol + NADP(+) + n H(+)(out). In terms of biological role, NDH shuttles electrons from NAD(P)H:plastoquinone, via FMN and iron-sulfur (Fe-S) centers, to quinones in the photosynthetic chain and possibly in a chloroplast respiratory chain. The immediate electron acceptor for the enzyme in this species is believed to be plastoquinone. Couples the redox reaction to proton translocation, and thus conserves the redox energy in a proton gradient. The chain is NAD(P)H-quinone oxidoreductase subunit H, chloroplastic from Staurastrum punctulatum (Green alga).